A 146-amino-acid polypeptide reads, in one-letter code: Hemoglobin subunit beta-C (146 aa).

Positions 2–146 (EWTDFERATI…VVSSLGRQYH (145 aa)) constitute a Globin domain. H63 and H92 together coordinate heme b.

It belongs to the globin family. In terms of assembly, hbC is a heterotetramer of two alpha chains and two beta-C chains. Red blood cells.

Its function is as follows. Involved in oxygen transport from gills to the various peripheral tissues. The chain is Hemoglobin subunit beta-C (hbbc) from Trematomus bernacchii (Emerald rockcod).